The primary structure comprises 1309 residues: Disease resistance protein RPP2A (1309 aa).

Residues 9–173 (RRYDVFPSFS…MVADDVSKKL (165 aa)) form the TIR 1 domain. E84 is a catalytic residue. One can recognise an NB-ARC 1 domain in the interval 187–418 (EAHLEAMSSI…FKKTLRNYLP (232 aa)). An ALOG domain is found at 488–585 (PNRRHSNDDW…KECILVFSCH (98 aa)). One can recognise a TIR 2 domain in the interval 574 to 737 (REKECILVFS…EVVRNASLRL (164 aa)). An NB-ARC 2 domain is found at 755-987 (SQSTDVEIMG…IFLDLACFFR (233 aa)). A coiled-coil region spans residues 1114–1141 (LPHGLDTLPDELSLLHWENYPLVYLPQK). 6 LRR repeats span residues 1145 to 1167 (VNLV…KKNL), 1168 to 1195 (EKLK…NLEH), 1214 to 1237 (CGKL…MVDL), 1238 to 1258 (TTLK…QDFA), 1259 to 1283 (PNLE…NLTE), and 1285 to 1307 (VTLD…EIIR).

Belongs to the disease resistance TIR-NB-LRR family.

The catalysed reaction is NAD(+) + H2O = ADP-D-ribose + nicotinamide + H(+). In terms of biological role, disease resistance protein that cooperates with RPP2B to confer resistance to Hyaloperonospora parasitica isolate Cala2. This is Disease resistance protein RPP2A from Arabidopsis thaliana (Mouse-ear cress).